We begin with the raw amino-acid sequence, 534 residues long: CTP synthase (534 aa).

The amidoligase domain stretch occupies residues 1–266; sequence MKTKFLFITG…DERIIDYLNI (266 aa). Position 14 (S14) interacts with CTP. Position 14 (S14) interacts with UTP. ATP contacts are provided by residues 15–20 and D72; that span reads SLGKGL. D72 and E140 together coordinate Mg(2+). CTP-binding positions include 147–149, 187–192, and K223; these read DIE and KTKPTQ. UTP-binding positions include 187 to 192 and K223; that span reads KTKPTQ. Residue 239 to 241 participates in ATP binding; that stretch reads RDV. A Glutamine amidotransferase type-1 domain is found at 291 to 533; sequence TIAIVGKYVE…VGASLKHHGE (243 aa). G353 contributes to the L-glutamine binding site. The Nucleophile; for glutamine hydrolysis role is filled by C380. L-glutamine contacts are provided by residues 381-384, E404, and R461; that span reads LGMQ. Catalysis depends on residues H506 and E508.

Belongs to the CTP synthase family. In terms of assembly, homotetramer.

The enzyme catalyses UTP + L-glutamine + ATP + H2O = CTP + L-glutamate + ADP + phosphate + 2 H(+). It carries out the reaction L-glutamine + H2O = L-glutamate + NH4(+). The catalysed reaction is UTP + NH4(+) + ATP = CTP + ADP + phosphate + 2 H(+). It participates in pyrimidine metabolism; CTP biosynthesis via de novo pathway; CTP from UDP: step 2/2. With respect to regulation, allosterically activated by GTP, when glutamine is the substrate; GTP has no effect on the reaction when ammonia is the substrate. The allosteric effector GTP functions by stabilizing the protein conformation that binds the tetrahedral intermediate(s) formed during glutamine hydrolysis. Inhibited by the product CTP, via allosteric rather than competitive inhibition. In terms of biological role, catalyzes the ATP-dependent amination of UTP to CTP with either L-glutamine or ammonia as the source of nitrogen. Regulates intracellular CTP levels through interactions with the four ribonucleotide triphosphates. In Syntrophotalea carbinolica (strain DSM 2380 / NBRC 103641 / GraBd1) (Pelobacter carbinolicus), this protein is CTP synthase.